The sequence spans 307 residues: Ribonuclease Z (307 aa).

Residues H63, H65, D67, H68, H141, D212, and H270 each coordinate Zn(2+). D67 serves as the catalytic Proton acceptor.

The protein belongs to the RNase Z family. Homodimer. Requires Zn(2+) as cofactor.

It carries out the reaction Endonucleolytic cleavage of RNA, removing extra 3' nucleotides from tRNA precursor, generating 3' termini of tRNAs. A 3'-hydroxy group is left at the tRNA terminus and a 5'-phosphoryl group is left at the trailer molecule.. Functionally, zinc phosphodiesterase, which displays some tRNA 3'-processing endonuclease activity. Probably involved in tRNA maturation, by removing a 3'-trailer from precursor tRNA. In Bacillus cereus (strain B4264), this protein is Ribonuclease Z.